The following is a 58-amino-acid chain: Large ribosomal subunit protein uL30 (58 aa).

The protein belongs to the universal ribosomal protein uL30 family. As to quaternary structure, part of the 50S ribosomal subunit.

This is Large ribosomal subunit protein uL30 from Bacteroides thetaiotaomicron (strain ATCC 29148 / DSM 2079 / JCM 5827 / CCUG 10774 / NCTC 10582 / VPI-5482 / E50).